We begin with the raw amino-acid sequence, 121 residues long: KTFTRCELVQALRRQGFDEAKLRDWVCLVENESRGRTDIVGKPNKNGSRDYGLFQINDKYWCSNTSKAGKDCNITCSQLLTDDITVASKCAKKVYKRHNFMAWYGWRNHCQNKPLPDISKC.

Residues 1–121 (KTFTRCELVQ…NKPLPDISKC (121 aa)) enclose the C-type lysozyme domain. Cystine bridges form between Cys-6/Cys-121, Cys-27/Cys-110, Cys-62/Cys-76, and Cys-72/Cys-90. Residues Glu-32 and Asp-50 contribute to the active site.

It belongs to the glycosyl hydrolase 22 family.

The enzyme catalyses Hydrolysis of (1-&gt;4)-beta-linkages between N-acetylmuramic acid and N-acetyl-D-glucosamine residues in a peptidoglycan and between N-acetyl-D-glucosamine residues in chitodextrins.. Lysozymes have primarily a bacteriolytic function; those in tissues and body fluids are associated with the monocyte-macrophage system and enhance the activity of immunoagents. The polypeptide is Lysozyme (Galleria mellonella (Greater wax moth)).